A 343-amino-acid polypeptide reads, in one-letter code: N-acetyl-gamma-glutamyl-phosphate reductase (343 aa).

Residue Cys-147 is part of the active site.

It belongs to the NAGSA dehydrogenase family. Type 1 subfamily.

Its subcellular location is the cytoplasm. The catalysed reaction is N-acetyl-L-glutamate 5-semialdehyde + phosphate + NADP(+) = N-acetyl-L-glutamyl 5-phosphate + NADPH + H(+). It functions in the pathway amino-acid biosynthesis; L-arginine biosynthesis; N(2)-acetyl-L-ornithine from L-glutamate: step 3/4. Functionally, catalyzes the NADPH-dependent reduction of N-acetyl-5-glutamyl phosphate to yield N-acetyl-L-glutamate 5-semialdehyde. This chain is N-acetyl-gamma-glutamyl-phosphate reductase, found in Staphylococcus aureus (strain USA300).